A 182-amino-acid polypeptide reads, in one-letter code: ATP-dependent protease subunit HslV (182 aa).

Threonine 2 is an active-site residue. 3 residues coordinate Na(+): glycine 157, cysteine 160, and threonine 163.

Belongs to the peptidase T1B family. HslV subfamily. A double ring-shaped homohexamer of HslV is capped on each side by a ring-shaped HslU homohexamer. The assembly of the HslU/HslV complex is dependent on binding of ATP.

The protein localises to the cytoplasm. It catalyses the reaction ATP-dependent cleavage of peptide bonds with broad specificity.. Allosterically activated by HslU binding. Protease subunit of a proteasome-like degradation complex believed to be a general protein degrading machinery. The chain is ATP-dependent protease subunit HslV from Sodalis glossinidius (strain morsitans).